Here is a 426-residue protein sequence, read N- to C-terminus: C4-dicarboxylate transport protein (426 aa).

Helical transmembrane passes span 8 to 28, 44 to 64, 78 to 98, 148 to 168, 173 to 193, 222 to 242, 297 to 317, and 355 to 375; these read VLYVQVIVAIIIGIGLGHFYP, LIKMVIGPIIFCTVVTGIAGM, LLYFEIVSTFALVLGLIATHV, GEILQILLIALLFGAVLATAG, VVTGFIDGLSHVLFGIVRIIT, LIGTFYLTSVVFVVVVLGIIA, GYSFNLDGTNIYMTMAVLFIA, and AATLAVVPTIPLSGMVLILGI.

This sequence belongs to the dicarboxylate/amino acid:cation symporter (DAACS) (TC 2.A.23) family.

Its subcellular location is the cell inner membrane. Responsible for the transport of dicarboxylates such as succinate, fumarate, and malate from the periplasm across the membrane. In Paraburkholderia xenovorans (strain LB400), this protein is C4-dicarboxylate transport protein.